We begin with the raw amino-acid sequence, 281 residues long: NADPH-dependent 7-cyano-7-deazaguanine reductase (281 aa).

81–83 (IES) lines the substrate pocket. 83 to 84 (SK) is a binding site for NADPH. Cys-188 serves as the catalytic Thioimide intermediate. The Proton donor role is filled by Asp-195. Position 227-228 (227-228 (HE)) interacts with substrate. 256–257 (RG) is a binding site for NADPH.

Belongs to the GTP cyclohydrolase I family. QueF type 2 subfamily. As to quaternary structure, homodimer.

It localises to the cytoplasm. It carries out the reaction 7-aminomethyl-7-carbaguanine + 2 NADP(+) = 7-cyano-7-deazaguanine + 2 NADPH + 3 H(+). Its pathway is tRNA modification; tRNA-queuosine biosynthesis. In terms of biological role, catalyzes the NADPH-dependent reduction of 7-cyano-7-deazaguanine (preQ0) to 7-aminomethyl-7-deazaguanine (preQ1). This chain is NADPH-dependent 7-cyano-7-deazaguanine reductase, found in Polaromonas naphthalenivorans (strain CJ2).